The chain runs to 31 residues: Cytochrome b6-f complex subunit 6 (31 aa).

The chain crosses the membrane as a helical span at residues 3–23; it reads LIIGYIILLACAFGLAAGLYF.

Belongs to the PetL family. In terms of assembly, the 4 large subunits of the cytochrome b6-f complex are cytochrome b6, subunit IV (17 kDa polypeptide, PetD), cytochrome f and the Rieske protein, while the 4 small subunits are PetG, PetL, PetM and PetN. The complex functions as a dimer.

Its subcellular location is the plastid. It is found in the chloroplast thylakoid membrane. Component of the cytochrome b6-f complex, which mediates electron transfer between photosystem II (PSII) and photosystem I (PSI), cyclic electron flow around PSI, and state transitions. PetL is important for photoautotrophic growth as well as for electron transfer efficiency and stability of the cytochrome b6-f complex. The chain is Cytochrome b6-f complex subunit 6 from Guillardia theta (Cryptophyte).